The following is a 156-amino-acid chain: Arginine repressor (156 aa).

The protein belongs to the ArgR family.

The protein localises to the cytoplasm. It participates in amino-acid biosynthesis; L-arginine biosynthesis [regulation]. Functionally, regulates arginine biosynthesis genes. In Aliivibrio fischeri (strain ATCC 700601 / ES114) (Vibrio fischeri), this protein is Arginine repressor.